We begin with the raw amino-acid sequence, 325 residues long: D site-binding protein (325 aa).

3 disordered regions span residues 1-100, 124-198, and 212-255; these read MARP…PGLL, LEHG…DPDT, and LALS…EQKD. The span at 17-28 shows a compositional bias: gly residues; it reads GPTGAPPGGGAL. Composition is skewed to low complexity over residues 29 to 38 and 71 to 80; these read LGLRSLLQGT and AGPADASAGA. Ser-86 bears the Phosphoserine mark. Low complexity predominate over residues 88–100; sequence RGRPGAAPGPGLL. Residues 129-153 are compositionally biased toward pro residues; the sequence is PPSPPPPGGPSPAPSPVRTPAPSPR. Residues 166–176 are compositionally biased toward low complexity; it reads PGHAPARAALG. A compositionally biased stretch (basic and acidic residues) spans 221 to 236; the sequence is ETFDPRRHRFSEEELK. Residues 255 to 318 form the bZIP domain; it reads DEKYWSRRYK…SHYRAVLSRY (64 aa). Positions 257-279 are basic motif; that stretch reads KYWSRRYKNNEAAKRSRDARRLK. A leucine-zipper region spans residues 283–297; that stretch reads ISVRAAFLEKENALL.

This sequence belongs to the bZIP family. PAR subfamily. Binds DNA as a homodimer or a heterodimer. Can form a heterodimer with TEF.

Its subcellular location is the nucleus. This transcriptional activator recognizes and binds to the sequence 5'-RTTAYGTAAY-3' found in the promoter of genes such as albumin, CYP2A4 and CYP2A5. It is not essential for circadian rhythm generation, but modulates important clock output genes. May be a direct target for regulation by the circadian pacemaker component clock. May affect circadian period and sleep regulation. This chain is D site-binding protein (DBP), found in Bos taurus (Bovine).